We begin with the raw amino-acid sequence, 364 residues long: Very-long-chain (3R)-3-hydroxyacyl-CoA dehydratase 3 (364 aa).

Residues 1-151 (MAMENQVLTP…ETLTNLRKGY (151 aa)) are Cytoplasmic-facing. The CS domain occupies 7–96 (VLTPHVYWAQ…KVSQWWERLT (90 aa)). Threonine 9 carries the post-translational modification Phosphothreonine. The stretch at 113-138 (LDESDAEMELRAKEEERLNKLRLESE) forms a coiled coil. Phosphoserine occurs at positions 116 and 137. The helical transmembrane segment at 152–172 (LFMYNLVQFLGFSWIFVNLTV) threads the bilayer. Topologically, residues 173-191 (RFCILGKESFYDTFHTVAD) are lumenal. Residues 192-212 (MMYFCQMLAVVETINAAIGVT) form a helical membrane-spanning segment. Residues 213 to 214 (TS) are Cytoplasmic-facing. Residues 215–235 (PVLPSLIQLLGRNFILFIIFG) traverse the membrane as a helical segment. The Lumenal portion of the chain corresponds to 236–244 (TMEEMQNKA). Residues 245–265 (VVFFVFYLWSAIEIFRYSFYM) traverse the membrane as a helical segment. Residues 266–282 (LTCIDMDWEVLTWLRYT) are Cytoplasmic-facing. Residues 283 to 303 (LWIPLYPLGCLAEAVSVVQSI) form a helical membrane-spanning segment. Residues tyrosine 288 and glutamate 295 contribute to the active site. At 304-324 (PIFNETGRFSFTLPYPVKIKV) the chain is on the lumenal side. Residues 325-345 (RFSFFLQIYLIMIFLGLYINF) form a helical membrane-spanning segment. Over 346 to 364 (RHLYKQRRRRYGQKKKKIH) the chain is Cytoplasmic.

It belongs to the very long-chain fatty acids dehydratase HACD family. In terms of assembly, may interact with enzymes of the ELO family (including ELOVL1); with those enzymes that mediate condensation, the first of the four steps of the reaction cycle responsible for fatty acids elongation, may be part of a larger fatty acids elongase complex. Interacts with RAC1.

Its subcellular location is the endoplasmic reticulum membrane. It carries out the reaction a very-long-chain (3R)-3-hydroxyacyl-CoA = a very-long-chain (2E)-enoyl-CoA + H2O. The catalysed reaction is (3R)-hydroxyhexadecanoyl-CoA = (2E)-hexadecenoyl-CoA + H2O. It participates in lipid metabolism; fatty acid biosynthesis. Its function is as follows. Catalyzes the third of the four reactions of the long-chain fatty acids elongation cycle. This endoplasmic reticulum-bound enzymatic process, allows the addition of two carbons to the chain of long- and very long-chain fatty acids/VLCFAs per cycle. This enzyme catalyzes the dehydration of the 3-hydroxyacyl-CoA intermediate into trans-2,3-enoyl-CoA, within each cycle of fatty acid elongation. Thereby, it participates in the production of VLCFAs of different chain lengths that are involved in multiple biological processes as precursors of membrane lipids and lipid mediators. Involved in Rac1-signaling pathways leading to the modulation of gene expression. In Pongo abelii (Sumatran orangutan), this protein is Very-long-chain (3R)-3-hydroxyacyl-CoA dehydratase 3.